Reading from the N-terminus, the 331-residue chain is Fe-S cluster assembly protein DRE2 (331 aa).

Residues 1-146 (MSEILLLLHP…MPTFKKPVSS (146 aa)) are N-terminal SAM-like domain. The interval 142 to 164 (KPVSSPVTLTDTSANNTDAEDDL) is disordered. Polar residues predominate over residues 146–158 (SPVTLTDTSANNT). The segment at 147–202 (PVTLTDTSANNTDAEDDLSMKRKLDSTKLAYFSDDSSGEEDDLIDENELIADSHKF) is linker. [2Fe-2S] cluster is bound by residues Cys212, Cys224, Cys227, and Cys229. Residues 212-229 (CELPNGKKRKKACKDCTC) are fe-S binding site A. Residues Cys294, Cys297, Cys305, and Cys308 each coordinate [4Fe-4S] cluster. 2 short sequence motifs (cx2C motif) span residues 294-297 (CSSC) and 305-308 (CDGC). A fe-S binding site B region spans residues 294-308 (CSSCALGDAFRCDGC).

This sequence belongs to the anamorsin family. Monomer. Interacts with TAH18. Interacts with MIA40. Requires [2Fe-2S] cluster as cofactor. [4Fe-4S] cluster serves as cofactor.

The protein localises to the cytoplasm. It localises to the mitochondrion intermembrane space. Functionally, component of the cytosolic iron-sulfur (Fe-S) protein assembly (CIA) machinery required for the maturation of extramitochondrial Fe-S proteins. Part of an electron transfer chain functioning in an early step of cytosolic Fe-S biogenesis, facilitating the de novo assembly of a [4Fe-4S] cluster on the scaffold complex CFD1-NBP35. Electrons are transferred to DRE2 from NADPH via the FAD- and FMN-containing protein TAH18. TAH18-DRE2 are also required for the assembly of the diferric tyrosyl radical cofactor of ribonucleotide reductase (RNR), probably by providing electrons for reduction during radical cofactor maturation in the catalytic small subunit RNR2. This is Fe-S cluster assembly protein DRE2 from Clavispora lusitaniae (strain ATCC 42720) (Yeast).